A 381-amino-acid polypeptide reads, in one-letter code: Pectin lyase 1 (381 aa).

Positions 1-20 (MKYASFIAAAAAALASAVSA) are cleaved as a signal peptide. 2 disulfide bridges follow: Cys83–Cys102 and Cys92–Cys227. Asn130 carries N-linked (GlcNAc...) asparagine glycosylation. The active site involves Arg257. Cys324 and Cys332 are joined by a disulfide.

The protein belongs to the polysaccharide lyase 1 family.

Its subcellular location is the secreted. The catalysed reaction is Eliminative cleavage of (1-&gt;4)-alpha-D-galacturonan methyl ester to give oligosaccharides with 4-deoxy-6-O-methyl-alpha-D-galact-4-enuronosyl groups at their non-reducing ends.. Pectinolytic enzymes consist of four classes of enzymes: pectin lyase, polygalacturonase, pectin methylesterase and rhamnogalacturonase. Among pectinolytic enzymes, pectin lyase is the most important in depolymerization of pectin, since it cleaves internal glycosidic bonds of highly methylated pectins. In Aspergillus oryzae (strain ATCC 42149 / RIB 40) (Yellow koji mold), this protein is Pectin lyase 1 (pel1).